A 103-amino-acid chain; its full sequence is Cytochrome c55X (103 aa).

The N-terminal stretch at 1–17 is a signal peptide; the sequence is MARLALLLVLLAGTAVA. Heme c-binding residues include Cys36, Cys39, and His40.

In terms of processing, binds 1 heme c group covalently per subunit.

It is found in the periplasm. Functionally, monoheme c-type cytochrome. This is Cytochrome c55X (nirC) from Paracoccus denitrificans (strain Pd 1222).